The primary structure comprises 187 residues: Ribosome maturation factor RimM (187 aa).

The region spanning 94 to 168 (DDEFYHADLV…RVIVDMPDGL (75 aa)) is the PRC barrel domain. The tract at residues 167 to 187 (GLIGGDKPDTSDTAPLGQDFD) is disordered.

The protein belongs to the RimM family. Binds ribosomal protein uS19.

The protein resides in the cytoplasm. Its function is as follows. An accessory protein needed during the final step in the assembly of 30S ribosomal subunit, possibly for assembly of the head region. Essential for efficient processing of 16S rRNA. May be needed both before and after RbfA during the maturation of 16S rRNA. It has affinity for free ribosomal 30S subunits but not for 70S ribosomes. The sequence is that of Ribosome maturation factor RimM from Jannaschia sp. (strain CCS1).